The following is an 89-amino-acid chain: Large ribosomal subunit protein bL27 (89 aa).

A disordered region spans residues 1–22 (MAHKKAGGSSRNGRDSAGRRLG).

This sequence belongs to the bacterial ribosomal protein bL27 family.

The polypeptide is Large ribosomal subunit protein bL27 (Dinoroseobacter shibae (strain DSM 16493 / NCIMB 14021 / DFL 12)).